Reading from the N-terminus, the 173-residue chain is Transcriptional regulator ERG homolog (173 aa).

Residues 1-84 (SGQIQLWQFL…HGKRYAYKFD (84 aa)) constitute a DNA-binding region (ETS).

The protein belongs to the ETS family.

It is found in the nucleus. Acts as a transcriptional activator. The polypeptide is Transcriptional regulator ERG homolog (ERG) (Lytechinus variegatus (Green sea urchin)).